Consider the following 65-residue polypeptide: Large ribosomal subunit protein uL29 (65 aa).

The protein belongs to the universal ribosomal protein uL29 family.

In Lactobacillus johnsonii (strain CNCM I-12250 / La1 / NCC 533), this protein is Large ribosomal subunit protein uL29.